A 383-amino-acid polypeptide reads, in one-letter code: Succinyl-diaminopimelate desuccinylase (383 aa).

Zn(2+) is bound at residue His-69. The active site involves Asp-71. Asp-103 is a Zn(2+) binding site. Glu-137 functions as the Proton acceptor in the catalytic mechanism. Zn(2+) is bound by residues Glu-138, Glu-166, and His-357.

Belongs to the peptidase M20A family. DapE subfamily. In terms of assembly, homodimer. The cofactor is Zn(2+). Requires Co(2+) as cofactor.

The catalysed reaction is N-succinyl-(2S,6S)-2,6-diaminopimelate + H2O = (2S,6S)-2,6-diaminopimelate + succinate. The protein operates within amino-acid biosynthesis; L-lysine biosynthesis via DAP pathway; LL-2,6-diaminopimelate from (S)-tetrahydrodipicolinate (succinylase route): step 3/3. Its function is as follows. Catalyzes the hydrolysis of N-succinyl-L,L-diaminopimelic acid (SDAP), forming succinate and LL-2,6-diaminopimelate (DAP), an intermediate involved in the bacterial biosynthesis of lysine and meso-diaminopimelic acid, an essential component of bacterial cell walls. The sequence is that of Succinyl-diaminopimelate desuccinylase from Rickettsia prowazekii (strain Madrid E).